Reading from the N-terminus, the 203-residue chain is Small ribosomal subunit protein uS4 (203 aa).

The 62-residue stretch at 93–154 folds into the S4 RNA-binding domain; sequence RRFDNVVYRC…KSRNLDAVAD (62 aa).

It belongs to the universal ribosomal protein uS4 family. In terms of assembly, part of the 30S ribosomal subunit. Contacts protein S5. The interaction surface between S4 and S5 is involved in control of translational fidelity.

In terms of biological role, one of the primary rRNA binding proteins, it binds directly to 16S rRNA where it nucleates assembly of the body of the 30S subunit. Its function is as follows. With S5 and S12 plays an important role in translational accuracy. This is Small ribosomal subunit protein uS4 from Chlorobaculum parvum (strain DSM 263 / NCIMB 8327) (Chlorobium vibrioforme subsp. thiosulfatophilum).